A 203-amino-acid chain; its full sequence is Outer-membrane lipoprotein LolB (203 aa).

An N-terminal signal peptide occupies residues 1-18 (MTLRSFLIFFLSSLILAG). The N-palmitoyl cysteine moiety is linked to residue Cys-19. Cys-19 carries the S-diacylglycerol cysteine lipid modification.

The protein belongs to the LolB family. In terms of assembly, monomer.

It localises to the cell outer membrane. Its function is as follows. Plays a critical role in the incorporation of lipoproteins in the outer membrane after they are released by the LolA protein. This chain is Outer-membrane lipoprotein LolB, found in Vibrio parahaemolyticus serotype O3:K6 (strain RIMD 2210633).